We begin with the raw amino-acid sequence, 213 residues long: Pyridoxine/pyridoxamine 5'-phosphate oxidase (213 aa).

Residues 60-65, 75-76, Lys-82, and Gln-104 each bind FMN; these read RMVLMK and YS. Position 65 (Lys-65) interacts with substrate. The substrate site is built by Tyr-122 and Arg-126. FMN is bound by residues 139–140 and Trp-184; that span reads QS. Residue 190–192 participates in substrate binding; the sequence is RLH. Position 194 (Arg-194) interacts with FMN.

The protein belongs to the pyridoxamine 5'-phosphate oxidase family. In terms of assembly, homodimer. The cofactor is FMN.

The enzyme catalyses pyridoxamine 5'-phosphate + O2 + H2O = pyridoxal 5'-phosphate + H2O2 + NH4(+). It carries out the reaction pyridoxine 5'-phosphate + O2 = pyridoxal 5'-phosphate + H2O2. The protein operates within cofactor metabolism; pyridoxal 5'-phosphate salvage; pyridoxal 5'-phosphate from pyridoxamine 5'-phosphate: step 1/1. Its pathway is cofactor metabolism; pyridoxal 5'-phosphate salvage; pyridoxal 5'-phosphate from pyridoxine 5'-phosphate: step 1/1. Functionally, catalyzes the oxidation of either pyridoxine 5'-phosphate (PNP) or pyridoxamine 5'-phosphate (PMP) into pyridoxal 5'-phosphate (PLP). In Rhodopseudomonas palustris (strain BisA53), this protein is Pyridoxine/pyridoxamine 5'-phosphate oxidase.